The primary structure comprises 367 residues: UDP-N-acetylglucosamine--N-acetylmuramyl-(pentapeptide) pyrophosphoryl-undecaprenol N-acetylglucosamine transferase (367 aa).

Residues 15 to 17 (TGG), Asn127, Arg163, Ser191, Ile249, and Gln294 contribute to the UDP-N-acetyl-alpha-D-glucosamine site.

It belongs to the glycosyltransferase 28 family. MurG subfamily.

It is found in the cell inner membrane. The catalysed reaction is di-trans,octa-cis-undecaprenyl diphospho-N-acetyl-alpha-D-muramoyl-L-alanyl-D-glutamyl-meso-2,6-diaminopimeloyl-D-alanyl-D-alanine + UDP-N-acetyl-alpha-D-glucosamine = di-trans,octa-cis-undecaprenyl diphospho-[N-acetyl-alpha-D-glucosaminyl-(1-&gt;4)]-N-acetyl-alpha-D-muramoyl-L-alanyl-D-glutamyl-meso-2,6-diaminopimeloyl-D-alanyl-D-alanine + UDP + H(+). It functions in the pathway cell wall biogenesis; peptidoglycan biosynthesis. Its function is as follows. Cell wall formation. Catalyzes the transfer of a GlcNAc subunit on undecaprenyl-pyrophosphoryl-MurNAc-pentapeptide (lipid intermediate I) to form undecaprenyl-pyrophosphoryl-MurNAc-(pentapeptide)GlcNAc (lipid intermediate II). The chain is UDP-N-acetylglucosamine--N-acetylmuramyl-(pentapeptide) pyrophosphoryl-undecaprenol N-acetylglucosamine transferase from Burkholderia pseudomallei (strain 668).